A 780-amino-acid polypeptide reads, in one-letter code: Gelsolin (780 aa).

Met-1 bears the N-acetylmethionine; alternate mark. The first 25 residues, 1-25, serve as a signal peptide directing secretion; it reads MAPYRSSLLCALLLLALCALSPSHA. The tract at residues 51–174 is actin-severing; that stretch reads VVEHPEFLKA…YKKGGVASGF (124 aa). A Gelsolin-like 1 repeat occupies 74 to 155; that stretch reads FDLVPVPPNL…EVQGFESSTF (82 aa). A Phosphotyrosine modification is found at Tyr-84. Ca(2+)-binding residues include Gly-90, Asp-91, Glu-122, Asp-134, Gly-139, and Ala-141. The actin-actin interfilament contact point stretch occupies residues 121–124; it reads DESG. 160-167 serves as a coordination point for a 1,2-diacyl-sn-glycero-3-phospho-(1D-myo-inositol-4,5-bisphosphate); sequence KSGLKYKK. Val-170 contributes to the Ca(2+) binding site. Residue 186 to 194 participates in a 1,2-diacyl-sn-glycero-3-phospho-(1D-myo-inositol-4,5-bisphosphate) binding; that stretch reads RLFQVKGRR. One copy of the Gelsolin-like 2 repeat lies at 196–268; it reads VRATEVPVSW…SEEGGEPEAM (73 aa). The Ca(2+) site is built by Gly-211 and Asp-212. Cys-213 and Cys-226 are joined by a disulfide. Glu-234 is a Ca(2+) binding site. The interval 244-269 is disordered; sequence GIRDNERSGRAQVHVSEEGGEPEAML. Residues Asp-284, Glu-327, Asp-328, and Glu-352 each coordinate Ca(2+). Residues 315–387 form a Gelsolin-like 3 repeat; it reads DENPFAQGAL…LPEGGETPLF (73 aa). A phosphotyrosine mark is found at Tyr-407 and Tyr-463. The interval 432 to 780 is actin-binding, Ca-sensitive; sequence AAQHGMDDDG…LDRALAELAA (349 aa). The Gelsolin-like 4 repeat unit spans residues 453–534; it reads SNKVPVDPAT…VQGKEPAHLM (82 aa). Residues Gly-469, Asp-470, Glu-500, Asp-512, Gly-517, Pro-519, and Thr-549 each coordinate Ca(2+). A Gelsolin-like 5 repeat occupies 575 to 640; it reads RAVEVMPKSG…EEGSEPDAFW (66 aa). Lys-582 is modified (N6-acetyllysine). Asn-589 and Asp-590 together coordinate Ca(2+). The residue at position 601 (Tyr-601) is a Phosphotyrosine. Residue Glu-612 participates in Ca(2+) binding. Tyr-649 bears the Phosphotyrosine mark. The Gelsolin-like 6 repeat unit spans residues 679–754; sequence IEEVPGELMQ…VRQGFEPPSF (76 aa). Positions 694, 695, and 717 each coordinate Ca(2+). At Thr-740 the chain carries Phosphothreonine.

It belongs to the villin/gelsolin family. In terms of assembly, binds to actin and to fibronectin. Identified in a complex composed of ACTA1, COBL, GSN and TMSB4X. Interacts with the inactive form of EIF2AK2/PKR. Interacts with FLII. Phosphorylated on tyrosine residues in vitro.

The protein resides in the cytoplasm. It localises to the cytoskeleton. It is found in the secreted. Its function is as follows. Calcium-regulated, actin-modulating protein that binds to the plus (or barbed) ends of actin monomers or filaments, preventing monomer exchange (end-blocking or capping). It can promote the assembly of monomers into filaments (nucleation) as well as sever filaments already formed. Plays a role in ciliogenesis. This chain is Gelsolin (Gsn), found in Mus musculus (Mouse).